A 359-amino-acid polypeptide reads, in one-letter code: Membrane-bound lytic murein transglycosylase C (359 aa).

The N-terminal stretch at 1–16 (MKKYLALALIAPLLIS) is a signal peptide. Cys17 is lipidated: N-palmitoyl cysteine. Residue Cys17 is the site of S-diacylglycerol cysteine attachment.

It belongs to the transglycosylase Slt family.

Its subcellular location is the cell outer membrane. The catalysed reaction is Exolytic cleavage of the (1-&gt;4)-beta-glycosidic linkage between N-acetylmuramic acid (MurNAc) and N-acetylglucosamine (GlcNAc) residues in peptidoglycan, from either the reducing or the non-reducing ends of the peptidoglycan chains, with concomitant formation of a 1,6-anhydrobond in the MurNAc residue.. Functionally, murein-degrading enzyme. May play a role in recycling of muropeptides during cell elongation and/or cell division. The chain is Membrane-bound lytic murein transglycosylase C from Shigella dysenteriae serotype 1 (strain Sd197).